Consider the following 423-residue polypeptide: Serine--tRNA ligase (423 aa).

Basic and acidic residues predominate over residues 1 to 12 (MIDLKALRENPD). Residues 1–26 (MIDLKALRENPDVGRASQRSRGEDPE) form a disordered region. 230–232 (TSE) serves as a coordination point for L-serine. Residues 261-263 (RRE) and V277 contribute to the ATP site. Residue E284 participates in L-serine binding. 348 to 351 (ELTS) provides a ligand contact to ATP. L-serine is bound at residue T383.

The protein belongs to the class-II aminoacyl-tRNA synthetase family. Type-1 seryl-tRNA synthetase subfamily. As to quaternary structure, homodimer. The tRNA molecule binds across the dimer.

It localises to the cytoplasm. It carries out the reaction tRNA(Ser) + L-serine + ATP = L-seryl-tRNA(Ser) + AMP + diphosphate + H(+). It catalyses the reaction tRNA(Sec) + L-serine + ATP = L-seryl-tRNA(Sec) + AMP + diphosphate + H(+). The protein operates within aminoacyl-tRNA biosynthesis; selenocysteinyl-tRNA(Sec) biosynthesis; L-seryl-tRNA(Sec) from L-serine and tRNA(Sec): step 1/1. In terms of biological role, catalyzes the attachment of serine to tRNA(Ser). Is also able to aminoacylate tRNA(Sec) with serine, to form the misacylated tRNA L-seryl-tRNA(Sec), which will be further converted into selenocysteinyl-tRNA(Sec). The chain is Serine--tRNA ligase from Beutenbergia cavernae (strain ATCC BAA-8 / DSM 12333 / CCUG 43141 / JCM 11478 / NBRC 16432 / NCIMB 13614 / HKI 0122).